A 256-amino-acid chain; its full sequence is DNA repair protein RecO (256 aa).

This sequence belongs to the RecO family.

Functionally, involved in DNA repair and RecF pathway recombination. This chain is DNA repair protein RecO, found in Streptococcus equi subsp. zooepidemicus (strain MGCS10565).